The primary structure comprises 547 residues: Chaperonin GroEL (547 aa).

ATP contacts are provided by residues 30–33 (TLGP), Lys-51, 87–91 (DGTTT), Gly-415, and Asp-495. Residues 525–547 (PDEKEAGGGAPDMGGMGGMGGMM) form a disordered region. Residues 531–547 (GGGAPDMGGMGGMGGMM) are compositionally biased toward gly residues.

This sequence belongs to the chaperonin (HSP60) family. As to quaternary structure, forms a cylinder of 14 subunits composed of two heptameric rings stacked back-to-back. Interacts with the co-chaperonin GroES.

It localises to the cytoplasm. It carries out the reaction ATP + H2O + a folded polypeptide = ADP + phosphate + an unfolded polypeptide.. Its function is as follows. Together with its co-chaperonin GroES, plays an essential role in assisting protein folding. The GroEL-GroES system forms a nano-cage that allows encapsulation of the non-native substrate proteins and provides a physical environment optimized to promote and accelerate protein folding. This is Chaperonin GroEL from Chromohalobacter salexigens (strain ATCC BAA-138 / DSM 3043 / CIP 106854 / NCIMB 13768 / 1H11).